Here is a 308-residue protein sequence, read N- to C-terminus: Glycine betaine uptake system ATP-binding protein YehX (308 aa).

The region spanning Ile-2–Phe-235 is the ABC transporter domain. Gly-34 to Ser-41 serves as a coordination point for ATP.

This sequence belongs to the ABC transporter superfamily. As to quaternary structure, the complex is composed of two ATP-binding proteins (YehX), two transmembrane proteins (YehW and YehY) and a solute-binding protein (YehZ).

It carries out the reaction glycine betaine(out) + ATP + H2O = glycine betaine(in) + ADP + phosphate + H(+). Functionally, part of an ABC transporter complex involved in low-affinity glycine betaine uptake. Probably responsible for energy coupling to the transport system. The chain is Glycine betaine uptake system ATP-binding protein YehX (yehX) from Escherichia coli (strain K12).